The sequence spans 232 residues: Large ribosomal subunit protein uL1 (232 aa).

It belongs to the universal ribosomal protein uL1 family. Part of the 50S ribosomal subunit.

Its function is as follows. Binds directly to 23S rRNA. The L1 stalk is quite mobile in the ribosome, and is involved in E site tRNA release. Protein L1 is also a translational repressor protein, it controls the translation of the L11 operon by binding to its mRNA. The protein is Large ribosomal subunit protein uL1 of Ruegeria pomeroyi (strain ATCC 700808 / DSM 15171 / DSS-3) (Silicibacter pomeroyi).